Here is a 706-residue protein sequence, read N- to C-terminus: Elongation factor G (706 aa).

A tr-type G domain is found at 15–291 (LKTRNIGISA…GVLDYLASPV (277 aa)). GTP is bound by residues 24–31 (AHIDSGKT), 91–95 (DTPGH), and 145–148 (NKLD).

This sequence belongs to the TRAFAC class translation factor GTPase superfamily. Classic translation factor GTPase family. EF-G/EF-2 subfamily.

It is found in the cytoplasm. Its function is as follows. Catalyzes the GTP-dependent ribosomal translocation step during translation elongation. During this step, the ribosome changes from the pre-translocational (PRE) to the post-translocational (POST) state as the newly formed A-site-bound peptidyl-tRNA and P-site-bound deacylated tRNA move to the P and E sites, respectively. Catalyzes the coordinated movement of the two tRNA molecules, the mRNA and conformational changes in the ribosome. This Leptospira interrogans serogroup Icterohaemorrhagiae serovar copenhageni (strain Fiocruz L1-130) protein is Elongation factor G.